Here is a 142-residue protein sequence, read N- to C-terminus: E1B protein, small T-antigen (142 aa).

It belongs to the adenoviridae E1B 19 kDa protein family.

Its subcellular location is the host cell membrane. The protein localises to the host nucleus envelope. It localises to the host nucleus lamina. Putative adenovirus Bcl-2 homolog that inhibits apoptosis induced by TNF or FAS pathways, as well as p53-mediated apoptosis. Without E1B 19K function, virus production is compromised because of premature death of host cell. Interacts with Bax protein in cell lysates. The chain is E1B protein, small T-antigen from Homo sapiens (Human).